Reading from the N-terminus, the 393-residue chain is MGISLRLAEQFSAEEDGGGGGGNLVFSPLSIYSALSVVTAGARGTTLTELLAALGAPSRDALAKNAAEIARALAGGTATGGPRVAHACGLWHERTRSLKLAFRDAAAASFNAATRAVDFLANPEEARKEINSWVAAATENLIDTILPPGSVSTDTGLVVTSAIYFNGTWQTPFRKQDTKKDKFHLLDGHGTVDADFMRTGEDQYIAAHDGFKVLKMPYAHDHAAPQPSPRYYSMYILLPDERDGLSSLEDRMAAAGGGGGGEGFLSEHMPVRRVEVGEFRIPRFKLSFSRSVVRALRGVGVNAVFDRAELPDMIEGEPLRVSDVLHKAVIEVNEEGTEAAAATAVLMEGAARYAPPPPPREDFVADHPFAFFVVEESSGAVLFAGHVVDPTKS.

The segment at 336–360 (GTEAAAATAVLMEGAARYAPPPPPR) is RCL.

This sequence belongs to the serpin family.

In terms of biological role, probable serine protease inhibitor. The polypeptide is Putative serpin-Z6A (Oryza sativa subsp. japonica (Rice)).